The sequence spans 633 residues: MHGLLLAGLLALPMNVLAHPAEQHASNVLSRRGVDIESFRLPLKAKYMDSDATAQKIQAMSFSKDDDYVSTATKLVKSTFPKSTFRVVDDHYIGTNGIGHVHFKQTAHGLDIDNSDFNVNIGRDGKVFSFGNSFFTGEIPKENPMVKRAFSDPVKALKGAVKALNLPVKSDNAKAKTAAGKEAFEFMGTTGALSAPKANLVYLQKEDGSLALTWKVETDVGDNWLLTYVDAHNSETVHNVVDYVASAEYKVFAWGLNDPTEGNPTSIRDPWTDASPYTWNSDGMTKYPTTRGNNAIAQDNPTGGSTYINNYRPQSPNLIFSYPWSPTATPPSSYKDFSITQLFYTTNRYHDLLYSFGFNEAAGNFQVNNGNKGGRGNDFAIVNAQDGSGTNNANFATPPDGSPGRMRMYNWTTARPNRDGCLEAGIVIHEYTHGLSNRLCGGPANSACLNALESGGMGEGWGDFYATAIRLKPRDTKDTNYSMGAWAANNPKGIRAYLYSTNLQTNPYMYTSVNSLREVHQIGTVWASMLYDLMWALIEAHGGTYSADPVFRNGVPQDGRHLSMKLVMDGMALQPCNPNFVQARDAILDADRALTNSANKCTIWKAFAKRGLGYGAKYDARNRTGSNKLPPGC.

Residues 1–18 (MHGLLLAGLLALPMNVLA) form the signal peptide. The propeptide occupies 19-246 (HPAEQHASNV…VHNVVDYVAS (228 aa)). N410 carries N-linked (GlcNAc...) asparagine glycosylation. H429 serves as a coordination point for Zn(2+). E430 is a catalytic residue. H433 is a binding site for Zn(2+). N-linked (GlcNAc...) asparagine glycosylation is found at N480 and N622.

This sequence belongs to the peptidase M36 family. The cofactor is Zn(2+).

Its subcellular location is the secreted. Its function is as follows. Secreted metalloproteinase probably acting as a virulence factor. The protein is Probable extracellular metalloproteinase 3 (MEP3) of Trichophyton verrucosum (strain HKI 0517).